A 396-amino-acid polypeptide reads, in one-letter code: MSIVINNIGLLVTNDPSVGTDELGQIRNAAVVICGDRIAWVGPSAQAPAADHQSDMAGACVIPGFVDSHSHPVFAGDRSDEFDARMNGQRYEAGGILRTVRRTREAPMGFLDAVMTGILDEMARSGTTTVEAKTGYGLDVETEVKLARVASSHTDEVTFLGAHVVAPECQPDEYVRLVCGEMLHAVRPYVRWIDVFCETGAFDPDQTLEILRAGTDAGLGLRLHAAQLGPSEVIPQACELGLAAVDHCTFLSDEDIDALKATGTVATLLPAAEFSTKQPYPDARRLFDAGVTVALATDCNPGTAFTSSIPFCLAIAVREMGMTPEQALWSATAGGAAALHRDDVGVVKPGARADLVSLAAPSWLHLMYRPGVPLIDRVCKAGRFLRLDQPRLRLDG.

Positions 69 and 71 each coordinate Fe(3+). Residues histidine 69 and histidine 71 each coordinate Zn(2+). 3 residues coordinate 4-imidazolone-5-propanoate: arginine 78, tyrosine 136, and histidine 163. Tyrosine 136 serves as a coordination point for N-formimidoyl-L-glutamate. Residue histidine 224 participates in Fe(3+) binding. Histidine 224 contributes to the Zn(2+) binding site. Residue glutamine 227 coordinates 4-imidazolone-5-propanoate. Residue aspartate 298 coordinates Fe(3+). Aspartate 298 is a binding site for Zn(2+). N-formimidoyl-L-glutamate-binding residues include asparagine 300 and glycine 302. Threonine 303 contacts 4-imidazolone-5-propanoate.

The protein belongs to the metallo-dependent hydrolases superfamily. HutI family. Zn(2+) is required as a cofactor. Requires Fe(3+) as cofactor.

The protein resides in the cytoplasm. It carries out the reaction 4-imidazolone-5-propanoate + H2O = N-formimidoyl-L-glutamate. The protein operates within amino-acid degradation; L-histidine degradation into L-glutamate; N-formimidoyl-L-glutamate from L-histidine: step 3/3. In terms of biological role, catalyzes the hydrolytic cleavage of the carbon-nitrogen bond in imidazolone-5-propanoate to yield N-formimidoyl-L-glutamate. It is the third step in the universal histidine degradation pathway. This chain is Imidazolonepropionase, found in Cutibacterium acnes (strain DSM 16379 / KPA171202) (Propionibacterium acnes).